We begin with the raw amino-acid sequence, 190 residues long: Vacuolar protein sorting-associated protein 29 (190 aa).

This sequence belongs to the VPS29 family. In terms of assembly, component of the retromer complex which consists of VPS29 (MAG1), VPS26 (VPS26A or VPS26B), VPS35 (VPS35A or VPS35B or VPS35C), VPS5/17 (SNX1 or SNX2A or SNX2B). Component of a retromer subcomplex consisting of VPS29 (MAG1), VPS26 (VPS26A or VPS26B), VPS35 (VPS35A or VPS35B or VPS35C).

It is found in the cytoplasm. The protein resides in the endosome membrane. It localises to the prevacuolar compartment membrane. Its subcellular location is the golgi apparatus. The protein localises to the trans-Golgi network membrane. It is found in the late endosome membrane. In terms of biological role, plays a role in vesicular protein sorting. Component of the membrane-associated retromer complex which is essential in endosome-to-Golgi retrograde transport. Required for the auxin-carrier protein PIN2 sorting to the lytic vacuolar pathway and the PIN1 recycling to the plasma membrane, thus influencing auxin transport orientation. Also involved in the efficient sorting of seed storage proteins globulin 12S and albumin 2S. The VPS29-VPS26-VPS35 subcomplex may be involved in recycling of specific cargos from endosome to the plasma membrane. The sequence is that of Vacuolar protein sorting-associated protein 29 from Arabidopsis thaliana (Mouse-ear cress).